Reading from the N-terminus, the 472-residue chain is F-box protein At3g03040 (472 aa).

The 49-residue stretch at M1–S49 folds into the F-box domain.

This chain is F-box protein At3g03040, found in Arabidopsis thaliana (Mouse-ear cress).